The primary structure comprises 543 residues: Thermosome subunit beta (543 aa).

The segment at 522 to 543 (TKSSSSSSNPPKSGSSSESSED) is disordered. Positions 523-543 (KSSSSSSNPPKSGSSSESSED) are enriched in low complexity.

It belongs to the TCP-1 chaperonin family. In terms of assembly, forms a Heterooligomeric complex of two stacked eight-membered rings. The N-terminus is blocked.

Functionally, molecular chaperone; binds unfolded polypeptides in vitro, and has a weak ATPase activity. This is Thermosome subunit beta (thsB) from Thermoplasma acidophilum (strain ATCC 25905 / DSM 1728 / JCM 9062 / NBRC 15155 / AMRC-C165).